The following is a 761-amino-acid chain: MALAHILGYPRIGANRELKKAVEAYWKGDIDQAELERRGQALRAEHWQASRDAGLDFVTVGDFAFYDQVLNVSAMLGAVPPRFGAIDGDVDLDTTFRMARGRAPSGTPAAACEMTKYFDTNYHYLVPELHAGQRFRVASTRLFDEVAEAQAAGHPVKVALLGPVSWLWLGKEKSAGLDRLTLLDDVLSVYGEILERLAAQGVEWVQLDEPALVQDLPRDWRQAFESAYNKLQSAPVKLLLATYFGALGDNLGLAAGLPVAGLHIDTVRAPEQLDAVLDRLPTYKVLSLGAIDGRNIWRADLAALRERLQVARARLGERLWISASCSLLHVPVDLDAETDLDAELKSWLAFARQKLDEIVTLAHLLDGRATPEDTARLEAATSALDARRQSPRIHKPAVGERLAAVSADDAERASPYATRAKAQHRHLDLPLFPTTTIGSFPQTQDIRAARRAFKSGELSRDDYEARMRDEIAHAVERQEALAIDVPVHGEPERNDMVEYFGELLDGFAFTRFGWVQSYGSRCVKPPVIFGDVSRPGPMTVRWSEYAQSLTDKPMKGMLTGPVTILQWSFVRDDQPRDATCRQIALSLRDEVADLEAAGIKIIQIDEPALREGLPLRQGEWQEYLDWAVKSFKLSAAVARDETQIHTHMCYSEFNDIIAAIAALDADVITIETSRSDMELLDAFQDFAYPNEIGPGVYDIHSPNIPEVEWMVSLMEKAAEKIPAERLWVNPDCGLKTRGWAEVEPALANMVEAARELRRRYG.

Residues 16–19 and lysine 116 each bind 5-methyltetrahydropteroyltri-L-glutamate; that span reads RELK. L-homocysteine is bound by residues 437-439 and glutamate 490; that span reads IGS. Residues 437-439 and glutamate 490 contribute to the L-methionine site; that span reads IGS. Residues 521–522 and tryptophan 567 each bind 5-methyltetrahydropteroyltri-L-glutamate; that span reads RC. Aspartate 605 provides a ligand contact to L-homocysteine. Position 605 (aspartate 605) interacts with L-methionine. A 5-methyltetrahydropteroyltri-L-glutamate-binding site is contributed by glutamate 611. Histidine 647, cysteine 649, and glutamate 671 together coordinate Zn(2+). Catalysis depends on histidine 700, which acts as the Proton donor. Residue cysteine 732 coordinates Zn(2+).

It belongs to the vitamin-B12 independent methionine synthase family. Requires Zn(2+) as cofactor.

It catalyses the reaction 5-methyltetrahydropteroyltri-L-glutamate + L-homocysteine = tetrahydropteroyltri-L-glutamate + L-methionine. The protein operates within amino-acid biosynthesis; L-methionine biosynthesis via de novo pathway; L-methionine from L-homocysteine (MetE route): step 1/1. In terms of biological role, catalyzes the transfer of a methyl group from 5-methyltetrahydrofolate to homocysteine resulting in methionine formation. This chain is 5-methyltetrahydropteroyltriglutamate--homocysteine methyltransferase, found in Chromohalobacter salexigens (strain ATCC BAA-138 / DSM 3043 / CIP 106854 / NCIMB 13768 / 1H11).